A 131-amino-acid polypeptide reads, in one-letter code: Small ribosomal subunit protein uS8 (131 aa).

It belongs to the universal ribosomal protein uS8 family. Part of the 30S ribosomal subunit. Contacts proteins S5 and S12.

In terms of biological role, one of the primary rRNA binding proteins, it binds directly to 16S rRNA central domain where it helps coordinate assembly of the platform of the 30S subunit. In Wolbachia pipientis subsp. Culex pipiens (strain wPip), this protein is Small ribosomal subunit protein uS8.